Consider the following 95-residue polypeptide: Large ribosomal subunit protein bL25 (95 aa).

It belongs to the bacterial ribosomal protein bL25 family. In terms of assembly, part of the 50S ribosomal subunit; part of the 5S rRNA/L5/L18/L25 subcomplex. Contacts the 5S rRNA. Binds to the 5S rRNA independently of L5 and L18.

Functionally, this is one of the proteins that binds to the 5S RNA in the ribosome where it forms part of the central protuberance. The polypeptide is Large ribosomal subunit protein bL25 (Buchnera aphidicola subsp. Acyrthosiphon pisum (strain 5A)).